Consider the following 655-residue polypeptide: Very long-chain specific acyl-CoA dehydrogenase, mitochondrial (655 aa).

The transit peptide at M1–Y40 directs the protein to the mitochondrion. A disordered region spans residues R23–G42. The tract at residues A41 to K482 is catalytic. K51 is modified (N6-acetyllysine). At K71 the chain carries N6-acetyllysine; alternate. Position 71 is an N6-succinyllysine; alternate (K71). Residue K195 is modified to N6-succinyllysine. F214–S223 serves as a coordination point for FAD. Residue C237 is modified to S-nitrosocysteine. Residue K239 is modified to N6-acetyllysine; alternate. At K239 the chain carries N6-succinyllysine; alternate. Residue W249–S251 coordinates FAD. An N6-acetyllysine; alternate mark is found at K276 and K278. Residues K276 and K278 each carry the N6-succinyllysine; alternate modification. Residue K298 is modified to N6-acetyllysine. At K331 the chain carries N6-acetyllysine; alternate. Position 331 is an N6-succinyllysine; alternate (K331). At K372 the chain carries N6-succinyllysine. F461–G463 contacts substrate. Residue E462 is the Proton acceptor of the active site. T464 to D466 contacts FAD. Position 482 is an N6-acetyllysine; alternate (K482). K482 is modified (N6-succinyllysine; alternate). The interval E483–G516 is membrane-anchoring. S517 and S522 each carry phosphoserine. Position 550 is an N6-acetyllysine (K550). K556 is modified (N6-acetyllysine; alternate). K556 carries the post-translational modification N6-succinyllysine; alternate. Q562 contributes to the FAD binding site. At K639 the chain carries N6-succinyllysine.

Belongs to the acyl-CoA dehydrogenase family. As to quaternary structure, homodimer. Homodimerizes after import into the mitochondrion. The cofactor is FAD. In terms of processing, S-nitrosylation at Cys-237 in liver improves catalytic efficiency. Predominantly expressed in heart and skeletal muscle (at protein level). Also detected in kidney and liver (at protein level).

The protein resides in the mitochondrion inner membrane. It catalyses the reaction a very-long-chain 2,3-saturated fatty acyl-CoA + oxidized [electron-transfer flavoprotein] + H(+) = a very-long-chain (2E)-enoyl-CoA + reduced [electron-transfer flavoprotein]. It carries out the reaction decanoyl-CoA + oxidized [electron-transfer flavoprotein] + H(+) = (2E)-decenoyl-CoA + reduced [electron-transfer flavoprotein]. The enzyme catalyses dodecanoyl-CoA + oxidized [electron-transfer flavoprotein] + H(+) = (2E)-dodecenoyl-CoA + reduced [electron-transfer flavoprotein]. The catalysed reaction is tetradecanoyl-CoA + oxidized [electron-transfer flavoprotein] + H(+) = (2E)-tetradecenoyl-CoA + reduced [electron-transfer flavoprotein]. It catalyses the reaction oxidized [electron-transfer flavoprotein] + hexadecanoyl-CoA + H(+) = (2E)-hexadecenoyl-CoA + reduced [electron-transfer flavoprotein]. It carries out the reaction octadecanoyl-CoA + oxidized [electron-transfer flavoprotein] + H(+) = (2E)-octadecenoyl-CoA + reduced [electron-transfer flavoprotein]. The enzyme catalyses eicosanoyl-CoA + oxidized [electron-transfer flavoprotein] + H(+) = (2E)-eicosenoyl-CoA + reduced [electron-transfer flavoprotein]. The catalysed reaction is docosanoyl-CoA + oxidized [electron-transfer flavoprotein] + H(+) = (2E)-docosenoyl-CoA + reduced [electron-transfer flavoprotein]. It catalyses the reaction tetracosanoyl-CoA + oxidized [electron-transfer flavoprotein] + H(+) = (2E)-tetracosenoyl-CoA + reduced [electron-transfer flavoprotein]. It carries out the reaction (9Z)-hexadecenoyl-CoA + oxidized [electron-transfer flavoprotein] + H(+) = (2E,9Z)-hexadecadienoyl-CoA + reduced [electron-transfer flavoprotein]. The enzyme catalyses oxidized [electron-transfer flavoprotein] + (9Z)-octadecenoyl-CoA + H(+) = (2E,9Z)-octadecadienoyl-CoA + reduced [electron-transfer flavoprotein]. Its pathway is lipid metabolism; mitochondrial fatty acid beta-oxidation. Its function is as follows. Very long-chain specific acyl-CoA dehydrogenase is one of the acyl-CoA dehydrogenases that catalyze the first step of mitochondrial fatty acid beta-oxidation, an aerobic process breaking down fatty acids into acetyl-CoA and allowing the production of energy from fats. The first step of fatty acid beta-oxidation consists in the removal of one hydrogen from C-2 and C-3 of the straight-chain fatty acyl-CoA thioester, resulting in the formation of trans-2-enoyl-CoA. Among the different mitochondrial acyl-CoA dehydrogenases, very long-chain specific acyl-CoA dehydrogenase acts specifically on acyl-CoAs with saturated 12 to 24 carbons long primary chains. The polypeptide is Very long-chain specific acyl-CoA dehydrogenase, mitochondrial (Homo sapiens (Human)).